The sequence spans 200 residues: Holliday junction branch migration complex subunit RuvA (200 aa).

The segment at 1-64 (MYAYFRGRLV…EDALQLYGFA (64 aa)) is domain I. The domain II stretch occupies residues 65–143 (TEEEKQLFRL…KLAPVGSAVA (79 aa)). The segment at 144-154 (SVAADRGGFRE) is flexible linker. Residues 154 to 200 (EDAVNALMTLGFPRPVANQAVGCALEPEPDASLEVVIKRALATMHNR) form a domain III region.

The protein belongs to the RuvA family. As to quaternary structure, homotetramer. Forms an RuvA(8)-RuvB(12)-Holliday junction (HJ) complex. HJ DNA is sandwiched between 2 RuvA tetramers; dsDNA enters through RuvA and exits via RuvB. An RuvB hexamer assembles on each DNA strand where it exits the tetramer. Each RuvB hexamer is contacted by two RuvA subunits (via domain III) on 2 adjacent RuvB subunits; this complex drives branch migration. In the full resolvosome a probable DNA-RuvA(4)-RuvB(12)-RuvC(2) complex forms which resolves the HJ.

The protein resides in the cytoplasm. Functionally, the RuvA-RuvB-RuvC complex processes Holliday junction (HJ) DNA during genetic recombination and DNA repair, while the RuvA-RuvB complex plays an important role in the rescue of blocked DNA replication forks via replication fork reversal (RFR). RuvA specifically binds to HJ cruciform DNA, conferring on it an open structure. The RuvB hexamer acts as an ATP-dependent pump, pulling dsDNA into and through the RuvAB complex. HJ branch migration allows RuvC to scan DNA until it finds its consensus sequence, where it cleaves and resolves the cruciform DNA. This is Holliday junction branch migration complex subunit RuvA from Chlorobium phaeovibrioides (strain DSM 265 / 1930) (Prosthecochloris vibrioformis (strain DSM 265)).